We begin with the raw amino-acid sequence, 319 residues long: Biotin synthase (319 aa).

Residues 41-267 (YKGNKVKVCS…TPDIMICGGR (227 aa)) form the Radical SAM core domain. [4Fe-4S] cluster is bound by residues Cys59, Cys63, and Cys66. Position 192 (Cys192) interacts with [2Fe-2S] cluster.

This sequence belongs to the radical SAM superfamily. Biotin synthase family. Homodimer. [4Fe-4S] cluster serves as cofactor. The cofactor is [2Fe-2S] cluster.

It catalyses the reaction (4R,5S)-dethiobiotin + (sulfur carrier)-SH + 2 reduced [2Fe-2S]-[ferredoxin] + 2 S-adenosyl-L-methionine = (sulfur carrier)-H + biotin + 2 5'-deoxyadenosine + 2 L-methionine + 2 oxidized [2Fe-2S]-[ferredoxin]. Its pathway is cofactor biosynthesis; biotin biosynthesis; biotin from 7,8-diaminononanoate: step 2/2. Functionally, catalyzes the conversion of dethiobiotin (DTB) to biotin by the insertion of a sulfur atom into dethiobiotin via a radical-based mechanism. The sequence is that of Biotin synthase from Endomicrobium trichonymphae.